We begin with the raw amino-acid sequence, 329 residues long: Malate dehydrogenase (329 aa).

Position 12–18 (12–18 (GAAGQIG)) interacts with NAD(+). Positions 93 and 99 each coordinate substrate. NAD(+) is bound by residues asparagine 106, glutamine 113, and 130-132 (VGN). Substrate-binding residues include asparagine 132 and arginine 163. Residue histidine 188 is the Proton acceptor of the active site.

Belongs to the LDH/MDH superfamily. MDH type 2 family.

The catalysed reaction is (S)-malate + NAD(+) = oxaloacetate + NADH + H(+). With respect to regulation, strongly inhibited by Hg(2+) and Zn(2+). Activated by Na(+), NH(4)(+), Ca(2+), Cu(2+) and Mg(2+). Catalyzes the reversible oxidation of malate to oxaloacetate. Exhibits remarkably higher catalytic efficiency for oxaloacetate reduction than for malate oxidation in vitro. Highly specific for NAD(H). Can also use NADPH for oxaloacetate reduction, but catalytic efficiency is 97-fold higher with NADH. No activity detected with NADP(+) and malate. The chain is Malate dehydrogenase from Streptomyces avermitilis (strain ATCC 31267 / DSM 46492 / JCM 5070 / NBRC 14893 / NCIMB 12804 / NRRL 8165 / MA-4680).